We begin with the raw amino-acid sequence, 78 residues long: DNA-directed RNA polymerase subunit Rpo5 (78 aa).

The protein belongs to the archaeal Rpo5/eukaryotic RPB5 RNA polymerase subunit family. Part of the RNA polymerase complex.

It localises to the cytoplasm. The catalysed reaction is RNA(n) + a ribonucleoside 5'-triphosphate = RNA(n+1) + diphosphate. DNA-dependent RNA polymerase (RNAP) catalyzes the transcription of DNA into RNA using the four ribonucleoside triphosphates as substrates. The polypeptide is DNA-directed RNA polymerase subunit Rpo5 (Methanococcus maripaludis (strain C7 / ATCC BAA-1331)).